The following is a 191-amino-acid chain: Probable DNA-directed RNA polymerase subunit delta (191 aa).

Positions 14–83 (LSMIEVARAI…GENKWGLRSW (70 aa)) constitute an HTH HARE-type domain. Composition is skewed to acidic residues over residues 117–136 (GDEDAIDYNDDDPEDEDFTE) and 142–191 (EYDE…EEEV). The disordered stretch occupies residues 117 to 191 (GDEDAIDYND…DEEEEEEEEV (75 aa)).

This sequence belongs to the RpoE family. In terms of assembly, RNAP is composed of a core of 2 alpha, a beta and a beta' subunits. The core is associated with a delta subunit and one of several sigma factors.

Participates in both the initiation and recycling phases of transcription. In the presence of the delta subunit, RNAP displays an increased specificity of transcription, a decreased affinity for nucleic acids, and an increased efficiency of RNA synthesis because of enhanced recycling. The sequence is that of Probable DNA-directed RNA polymerase subunit delta from Streptococcus agalactiae serotype Ia (strain ATCC 27591 / A909 / CDC SS700).